The chain runs to 984 residues: Mineralocorticoid receptor (984 aa).

Positions 1–602 are modulating; it reads METKGYHSLP…STGSSRPSKI (602 aa). Positions 231–243 are enriched in polar residues; that stretch reads QGTPLTCSPNVEN. Disordered regions lie at residues 231-329 and 347-373; these read QGTP…AAST and GTSA…QEVP. A phosphoserine mark is found at Ser250, Ser259, Ser283, Ser287, and Ser299. Residues 259-291 are compositionally biased toward low complexity; the sequence is SPLSSPLSSMKSSISSPPSHCSVKSPVSSPNNV. The segment covering 292–329 has biased composition (polar residues); it reads TLRSSVSSPANINNSRCSVSSPSNTNNRSTLSSPAAST. Residues Cys603, Cys606, Cys620, Cys623, Cys639, Cys645, Cys655, and Cys658 each contribute to the Zn(2+) site. NR C4-type zinc fingers lie at residues 603-623 and 639-663; these read CLVC…CGSC and CAGR…LQKC. A DNA-binding region (nuclear receptor) is located at residues 603-668; that stretch reads CLVCGDEASG…RLQKCLQAGM (66 aa). Positions 669 to 725 are hinge; the sequence is NLGARKSKKLGKLKGIHEEQPQQQQPPPPPPPPQSPEEGTTYIAPAKEPSVNTALVP. Positions 684–710 are disordered; it reads IHEEQPQQQQPPPPPPPPQSPEEGTTY. Positions 692–703 are enriched in pro residues; it reads QQPPPPPPPPQS. The region spanning 726–964 is the NR LBD domain; it reads QLSTISRALT…EFPAMLVEII (239 aa). Residues Asn770 and Gln776 each coordinate 21-hydroxyprogesterone. Residues Asn770 and Gln776 each contribute to the aldosterone site. Positions 770 and 776 each coordinate progesterone. The segment at 782–785 is important for coactivator binding; it reads KWAK. Arg817 and Thr945 together coordinate 21-hydroxyprogesterone. Residues Arg817 and Thr945 each contribute to the aldosterone site. Positions 817 and 945 each coordinate progesterone.

This sequence belongs to the nuclear hormone receptor family. NR3 subfamily. Heteromultimeric cytoplasmic complex with HSP90, HSP70, and FKBP4, in the absence of ligand. After ligand binding, it translocates to the nucleus and binds to DNA as a homodimer and as a heterodimer with NR3C1. May interact with HSD11B2 in the absence of ligand. Binds the coactivators NCOA1, NCOA2, TIF1 and NRIP1. Phosphorylated. As to expression, ubiquitous. Highly expressed in distal tubules, convoluted tubules and cortical collecting duct in kidney, and in sweat glands. Detected at lower levels in cardiomyocytes, in epidermis and in colon enterocytes.

It localises to the cytoplasm. The protein resides in the nucleus. It is found in the endoplasmic reticulum membrane. Functionally, receptor for both mineralocorticoids (MC) such as aldosterone and glucocorticoids (GC) such as corticosterone or cortisol. Binds to mineralocorticoid response elements (MRE) and transactivates target genes. The effect of MC is to increase ion and water transport and thus raise extracellular fluid volume and blood pressure and lower potassium levels. This Homo sapiens (Human) protein is Mineralocorticoid receptor (NR3C2).